Here is a 200-residue protein sequence, read N- to C-terminus: MARCKS-related protein (200 aa).

The tract at residues 1 to 200 (MGSQSSKAPR…PTPASAEQNE (200 aa)) is disordered. Glycine 2 carries the N-myristoyl glycine lipid modification. Threonine 14 carries the phosphothreonine modification. The segment covering 16 to 26 (EEAAGASPAKA) has biased composition (low complexity). Serine 22, serine 36, and serine 48 each carry phosphoserine. A compositionally biased stretch (low complexity) spans 53-64 (GTDEAAGATGDA). Position 71 is a phosphoserine (serine 71). Residues 74 to 85 (AEAKGEVAPKET) are compositionally biased toward basic and acidic residues. A Phosphothreonine modification is found at threonine 85. A compositionally biased stretch (basic residues) spans 86 to 98 (PKKKKKFSFKKPF). Positions 87–110 (KKKKKFSFKKPFKLSGLSFKRNRK) are effector domain involved in lipid-binding and calmodulin-binding. A phosphoserine; by PKC mark is found at serine 93, serine 101, and serine 104. Residue serine 119 is modified to Phosphoserine. Serine 120 carries the phosphoserine; by MAPK8 modification. Serine 132 and serine 135 each carry phosphoserine. At threonine 148 the chain carries Phosphothreonine; by MAPK8. A phosphoserine mark is found at serine 151, serine 162, and serine 165. Residues 156 to 165 (AKGAEASAAS) show a composition bias toward low complexity. Threonine 170 is modified (phosphothreonine). Positions 178–200 (AAEPSTPSGPESGPTPASAEQNE) are enriched in low complexity. A Phosphothreonine; by MAPK8 modification is found at threonine 183. A Phosphothreonine modification is found at threonine 192.

This sequence belongs to the MARCKS family. As to quaternary structure, binds to filamentous actin (F-actin), but not to monomeric G-actin, independently of its phosphorylation status. Interacts with calmodulin. Phosphorylated. Phosphorylation at Ser-120 and Thr-183 is non-redundantly catalyzed by MAPK8 in vivo. Phosphorylation at Thr-148 is preferentially catalyzed by MAPK8 in vivo, but this modification can also be catalyzed by other kinases in the absence of MAPK8. May be phosphorylated by protein kinase C, which disrupts the interaction with calmodulin. Expressed at high levels in brain cortex and hippocampus, including dentate gyrus, anterior olfactory nucleus, primary olfactory cortex, entorhinal cortex, medial preoptic area and dorsomedial hypothalamic nucleus (at protein level). Expressed in neuronal cells (at protein level). Detected in the retina. Strongly expressed in testis and uterus; expressed at lower levels in cerebellum, cerebrum, adipose tissue, spleen, kidney, thyroid, liver, lung, skeletal muscle and heart. Detected in T-cells and B-cells.

The protein localises to the cytoplasm. It localises to the cytoskeleton. The protein resides in the cell membrane. Functionally, involved in the control of cell movement by regulating actin cytoskeleton homeostasis and filopodium and lamellipodium formation. When unphosphorylated, induces cell migration. When phosphorylated by MAPK8, induces actin bundles formation and stabilization, thereby reducing actin plasticity, hence restricting cell movement, including neuronal migration. May be involved in coupling the protein kinase C and calmodulin signal transduction systems. In Mus musculus (Mouse), this protein is MARCKS-related protein (Marcksl1).